Reading from the N-terminus, the 381-residue chain is Creatine kinase B-type (381 aa).

The residue at position 4 (S4) is a Phosphoserine. Residues 11–98 (KLRFPAEDEF…FDPIIEDRHG (88 aa)) enclose the Phosphagen kinase N-terminal domain. At T35 the chain carries Phosphothreonine. Residue K45 forms a Glycyl lysine isopeptide (Lys-Gly) (interchain with G-Cter in ubiquitin) linkage. Position 72 (V72) interacts with creatine. Residues 96 to 110 (RHGGYQPSDEHKTDL) show a composition bias toward basic and acidic residues. The disordered stretch occupies residues 96 to 122 (RHGGYQPSDEHKTDLNPDNLQGGDDLD). K107 participates in a covalent cross-link: Glycyl lysine isopeptide (Lys-Gly) (interchain with G-Cter in ubiquitin). Phosphotyrosine is present on Y125. The region spanning 125 to 367 (YVLSSRVRTG…KLLIEMEQRL (243 aa)) is the Phosphagen kinase C-terminal domain. ATP contacts are provided by residues 128–132 (SSRVR), R130, R132, and H191. Residues 130 to 138 (RVRTGRSIR) are internal MTS-like signal. Position 199 is a phosphoserine (S199). E232 lines the creatine pocket. Residue R236 participates in ATP binding. Position 269 is a 3'-nitrotyrosine (Y269). S285 contributes to the creatine binding site. R292 contacts ATP. The residue at position 309 (S309) is a Phosphoserine. Residues R320, 320–325 (RGTGGV), and D335 contribute to the ATP site. Residue T322 is modified to Phosphothreonine. A Glycyl lysine isopeptide (Lys-Gly) (interchain with G-Cter in ubiquitin) cross-link involves residue K381.

It belongs to the ATP:guanido phosphotransferase family. As to quaternary structure, dimer of identical or non-identical chains, which can be either B (brain type) or M (muscle type). With MM being the major form in skeletal muscle and myocardium, MB existing in myocardium, and BB existing in many tissues, especially brain. Interacts with SLC12A6 (via C-terminus); the interaction may be required for SLC12A6 potassium-chloride cotransport activity. Ubiquitinated by the ECS(ASB9) complex, leading to its degradation by the proteasome. In terms of tissue distribution, in the kidney localized primarily in the outer medulla in the thick ascending limb and distal convoluted tubule.

It localises to the cytoplasm. It is found in the cytosol. Its subcellular location is the mitochondrion. The protein resides in the cell membrane. It catalyses the reaction creatine + ATP = N-phosphocreatine + ADP + H(+). Its function is as follows. Reversibly catalyzes the transfer of phosphate between ATP and various phosphogens (e.g. creatine phosphate). Creatine kinase isoenzymes play a central role in energy transduction in tissues with large, fluctuating energy demands, such as skeletal muscle, heart, brain and spermatozoa. Acts as a key regulator of adaptive thermogenesis as part of the futile creatine cycle: localizes to the mitochondria of thermogenic fat cells and acts by mediating phosphorylation of creatine to initiate a futile cycle of creatine phosphorylation and dephosphorylation. During the futile creatine cycle, creatine and N-phosphocreatine are in a futile cycle, which dissipates the high energy charge of N-phosphocreatine as heat without performing any mechanical or chemical work. The sequence is that of Creatine kinase B-type (Ckb) from Rattus norvegicus (Rat).